Consider the following 251-residue polypeptide: Coproheme decarboxylase (251 aa).

Fe-coproporphyrin III is bound by residues Arg-133, 147 to 151, His-174, Gln-187, and Ser-225; that span reads YPMSK. Tyr-147 is an active-site residue.

Belongs to the ChdC family. Type 1 subfamily. It depends on Fe-coproporphyrin III as a cofactor.

It catalyses the reaction Fe-coproporphyrin III + 2 H2O2 + 2 H(+) = heme b + 2 CO2 + 4 H2O. The enzyme catalyses Fe-coproporphyrin III + H2O2 + H(+) = harderoheme III + CO2 + 2 H2O. It carries out the reaction harderoheme III + H2O2 + H(+) = heme b + CO2 + 2 H2O. It participates in porphyrin-containing compound metabolism; protoheme biosynthesis. Functionally, involved in coproporphyrin-dependent heme b biosynthesis. Catalyzes the decarboxylation of Fe-coproporphyrin III (coproheme) to heme b (protoheme IX), the last step of the pathway. The reaction occurs in a stepwise manner with a three-propionate intermediate. This is Coproheme decarboxylase from Listeria welshimeri serovar 6b (strain ATCC 35897 / DSM 20650 / CCUG 15529 / CIP 8149 / NCTC 11857 / SLCC 5334 / V8).